Reading from the N-terminus, the 554-residue chain is Bifunctional epoxide hydrolase 2 (554 aa).

A phosphatase region spans residues 1 to 224 (MALRVAAFDL…KVTGTQFPEA (224 aa)). The Mg(2+) site is built by Asp9 and Asp11. An N6-succinyllysine modification is found at Lys55. 123–124 (TN) serves as a coordination point for phosphate. Lys176 bears the N6-acetyllysine; alternate mark. Lys176 carries the N6-succinyllysine; alternate modification. Residue Asp185 coordinates Mg(2+). N6-acetyllysine is present on residues Lys191 and Lys215. An epoxide hydrolase region spans residues 233–554 (NDVSHGYVTV…IQNPSVTSKI (322 aa)). The region spanning 257 to 530 (PAICLCHGFP…CGHWTQIEKP (274 aa)) is the AB hydrolase-1 domain. Asp333 acts as the Nucleophile in catalysis. Ser368 carries the post-translational modification Phosphoserine. Tyr381 lines the substrate pocket. An N6-succinyllysine mark is found at Lys420 and Lys454. Tyr465 acts as the Proton donor in catalysis. Lys504 bears the N6-succinyllysine mark. Cys521 carries S-(15-deoxy-Delta12,14-prostaglandin J2-9-yl)cysteine lipidation. His523 functions as the Proton acceptor in the catalytic mechanism. The Microbody targeting signal signature appears at 552-554 (SKI). Lys553 carries the N6-succinyllysine modification.

This sequence belongs to the AB hydrolase superfamily. Epoxide hydrolase family. In terms of assembly, homodimer. The cofactor is Mg(2+). Post-translationally, the covalent modification of cysteine by 15-deoxy-Delta12,14-prostaglandin-J2 is autocatalytic and reversible. It may occur as an alternative to other cysteine modifications, such as S-nitrosylation and S-palmitoylation.

It localises to the cytoplasm. The protein resides in the peroxisome. The catalysed reaction is an epoxide + H2O = an ethanediol. It catalyses the reaction (9S,10S)-10-hydroxy-9-(phosphooxy)octadecanoate + H2O = (9S,10S)-9,10-dihydroxyoctadecanoate + phosphate. The enzyme catalyses 8-hydroxy-(11S,12S)-epoxy-(5Z,9E,14Z)-eicosatrienoate + H2O = (8,11R,12S)-trihydroxy-(5Z,9E,14Z)-eicosatrienoate. It carries out the reaction 10-hydroxy-(11S,12S)-epoxy- (5Z,8Z,14Z)-eicosatrienoate + H2O = (10,11S,12R)-trihydroxy-(5Z,8Z,14Z)-eicosatrienoate. The catalysed reaction is 12-phosphooxy-(9Z)-octadecenoate + H2O = 12-hydroxy-(9Z)-octadecenoate + phosphate. It catalyses the reaction 12-phosphooxy-(9E)-octadecenoate + H2O = 12-hydroxy-(9E)-octadecenoate + phosphate. The enzyme catalyses 12-(phosphooxy)octadecanoate + H2O = 12-hydroxyoctadecanoate + phosphate. It carries out the reaction 8,9-epoxy-(5Z,11Z,14Z)-eicosatrienoate + H2O = 8,9-dihydroxy-(5Z,11Z,14Z)-eicosatrienoate. The catalysed reaction is 11,12-epoxy-(5Z,8Z,14Z)-eicosatrienoate + H2O = 11,12-dihydroxy-(5Z,8Z,14Z)-eicosatrienoate. It catalyses the reaction 14,15-epoxy-(5Z,8Z,11Z)-eicosatrienoate + H2O = 14,15-dihydroxy-(5Z,8Z,11Z)-eicosatrienoate. The enzyme catalyses 9,10-epoxy-(12Z)-octadecenoate + H2O = 9,10-dihydroxy-(12Z)-octadecenoate. It carries out the reaction 1-tetradecanoyl-sn-glycerol 3-phosphate + H2O = 1-tetradecanoyl-sn-glycerol + phosphate. The catalysed reaction is 1-octadecanoyl-sn-glycero-3-phosphate + H2O = 1-octadecanoyl-sn-glycerol + phosphate. It catalyses the reaction 1-(5Z,8Z,11Z,14Z-eicosatetraenoyl)-sn-glycero-3-phosphate + H2O = 1-(5Z,8Z,11Z,14Z-eicosatetraenoyl)-sn-glycerol + phosphate. The enzyme catalyses 1-hexadecanoyl-sn-glycero-3-phosphate + H2O = 1-hexadecanoyl-sn-glycerol + phosphate. It carries out the reaction 1-(9Z-octadecenoyl)-sn-glycero-3-phosphate + H2O = 1-(9Z-octadecenoyl)-sn-glycerol + phosphate. The catalysed reaction is (8S,9R)-epoxy-(5Z,11Z,14Z)-eicosatrienoate + H2O = (8S,9S)-dihydroxy-(5Z,11Z,14Z)-eicosatrienoate. It catalyses the reaction (11S,12R)-epoxy-(5Z,8Z,14Z)-eicosatrienoate + H2O = (11R,12R)-dihydroxy-(5Z,8Z,14Z)-eicosatrienoate. The enzyme catalyses (11S,12R)-epoxy-(5Z,8Z,14Z)-eicosatrienoate + H2O = (11S,12S)-dihydroxy-(5Z,8Z,14Z)-eicosatrienoate. It carries out the reaction (14S,15R)-epoxy-(5Z,8Z,11Z)-eicosatrienoate + H2O = (14R,15R)-dihydroxy-(5Z,8Z,11Z)-eicosatrienoate. The catalysed reaction is (14S,15R)-epoxy-(5Z,8Z,11Z)-eicosatrienoate + H2O = (14S,15S)-dihydroxy-(5Z,8Z,11Z)-eicosatrienoate. It catalyses the reaction (11R,12S)-epoxy-(5Z,8Z,14Z)-eicosatrienoate + H2O = (11S,12S)-dihydroxy-(5Z,8Z,14Z)-eicosatrienoate. The enzyme catalyses (11R,12S)-epoxy-(5Z,8Z,14Z)-eicosatrienoate + H2O = (11R,12R)-dihydroxy-(5Z,8Z,14Z)-eicosatrienoate. It carries out the reaction (8S,9R)-epoxy-(5Z,11Z,14Z)-eicosatrienoate + H2O = (8R,9R)-dihydroxy-(5Z,11Z,14Z)-eicosatrienoate. The catalysed reaction is (14R,15S)-epoxy-(5Z,8Z,11Z)-eicosatrienoate + H2O = (14R,15R)-dihydroxy-(5Z,8Z,11Z)-eicosatrienoate. Its activity is regulated as follows. Inhibited by 1-(1-acetylpiperidin-4-yl)-3-(4-(trifl uoromethoxy)phenyl)urea (TPAU), 1-cyclohexyl-3-dodecylurea (CDU), 12-(3-adamantan-1-yl-ureido)-dodecanoic acid (AUDA), 1-((3S, 5S, 7S)-adamantan-1-yl)-3-(5-(2-(2-ethoxyethoxy) ethoxy)pentyl)urea (AEPU), N-adamantyl-N[']-cyclohexyl urea (ACU), 4-(((1S, 4S)-4-(3-((3S, 5S, 7S)-adamantan-1-yl) ureido)cyclohexyl)oxy)benzoic acid (c-AUCB), 4-(((1R, 4R)-4-(3-((3S, 5S, 7S)-adamantan-1-yl)ureido)cyclohexyl)oxy)benzoic acid (t-AUCB), 4-(((1R, 4R)-4-(3-(4(trifluoromethoxy)phenyl)ureido)cyclohexyl)oxy)benzoic acid (t-TAUCB) and to a lesser extent by 8-(3-((3S, 5S, 7S)-adamantan-1-yl)ureido) octanoic acid (AUOA). Phosphatase activity is inhibited by dodecyl-phosphate, phospholipids such as phospho-lysophosphatidic acids and fatty acids such as palmitic acid and lauric acid. In terms of biological role, bifunctional enzyme. The C-terminal domain has epoxide hydrolase activity and acts on epoxides (alkene oxides, oxiranes) and arene oxides. Plays a role in xenobiotic metabolism by degrading potentially toxic epoxides. Also determines steady-state levels of physiological mediators. The N-terminal domain has lipid phosphatase activity, with the highest activity towards threo-9,10-phosphonooxy-hydroxy-octadecanoic acid, followed by erythro-9,10-phosphonooxy-hydroxy-octadecanoic acid, 12-phosphonooxy-octadec-9Z-enoic acid and 12-phosphonooxy-octadec-9E-enoic acid. Bifunctional enzyme. The C-terminal domain has epoxide hydrolase activity and acts on epoxides (alkene oxides, oxiranes) and arene oxides. Plays a role in xenobiotic metabolism by degrading potentially toxic epoxides. Also determines steady-state levels of physiological mediators. Functionally, bifunctional enzyme. The N-terminal domain has lipid phosphatase activity, with the highest activity towards threo-9,10-phosphonooxy-hydroxy-octadecanoic acid, followed by erythro-9,10-phosphonooxy-hydroxy-octadecanoic acid, 12-phosphonooxy-octadec-9Z-enoic acid and 12-phosphonooxy-octadec-9E-enoic acid. Has phosphatase activity toward lyso-glycerophospholipids with also some lower activity toward lysolipids of sphingolipid and isoprenoid phosphates. The chain is Bifunctional epoxide hydrolase 2 from Rattus norvegicus (Rat).